The chain runs to 301 residues: MFFRNLTLFRFPTTLDFSQIDTLLPPVQLKPVGPLEMSSRGFISPFGRDEQEVLSHRLEDFLWLTVGGEDKILPGAVVNDLLERKVAEIEEKEGRRPGGKARKRLKDDLIHELLPRAFVKSSRTDAILDLQHGYIAVNSSSRKSGENVMSEIRGALGSFPALPLNAEVAPRAILTGWIAGEPLPEGLSLGEECEMKDPIEGGAVVKCQHQELRGDEIDKHLEAGKQVTKLALVLDDNLSFVLGDDLVIRKLKFLDGALDQLEHSEDDGARAELDARFALMSAEIRRLFLLLETALKLSKAE.

This sequence belongs to the RdgC family.

The protein localises to the cytoplasm. It localises to the nucleoid. Its function is as follows. May be involved in recombination. The protein is Recombination-associated protein RdgC of Xanthomonas axonopodis pv. citri (strain 306).